Here is a 376-residue protein sequence, read N- to C-terminus: Ribonucleoside-diphosphate reductase subunit beta (376 aa).

3 residues coordinate Fe cation: D85, E116, and H119. Residue Y123 is part of the active site. Fe cation contacts are provided by E205, E239, and H242.

Belongs to the ribonucleoside diphosphate reductase small chain family. As to quaternary structure, tetramer of two alpha and two beta subunits. It depends on Fe cation as a cofactor.

The catalysed reaction is a 2'-deoxyribonucleoside 5'-diphosphate + [thioredoxin]-disulfide + H2O = a ribonucleoside 5'-diphosphate + [thioredoxin]-dithiol. Its function is as follows. Provides the precursors necessary for DNA synthesis. Catalyzes the biosynthesis of deoxyribonucleotides from the corresponding ribonucleotides. The chain is Ribonucleoside-diphosphate reductase subunit beta (nrdB) from Haemophilus influenzae (strain ATCC 51907 / DSM 11121 / KW20 / Rd).